The sequence spans 280 residues: Beta-glucosyl-HMC-alpha-glucosyl-transferase (280 aa).

It functions in the pathway genetic information processing; DNA modification. Transfers a gentiobiosyl-group on a hydroxymethylcytosine residue in DNA. Is involved in a DNA modification process to protects the phage genome against its own nucleases and the host restriction endonuclease system. The sequence is that of Beta-glucosyl-HMC-alpha-glucosyl-transferase from Enterobacteria phage T6 (Bacteriophage T6).